A 213-amino-acid polypeptide reads, in one-letter code: Uridine kinase (213 aa).

15–22 (GASASGKS) contributes to the ATP binding site.

It belongs to the uridine kinase family.

It localises to the cytoplasm. It carries out the reaction uridine + ATP = UMP + ADP + H(+). The catalysed reaction is cytidine + ATP = CMP + ADP + H(+). Its pathway is pyrimidine metabolism; CTP biosynthesis via salvage pathway; CTP from cytidine: step 1/3. It functions in the pathway pyrimidine metabolism; UMP biosynthesis via salvage pathway; UMP from uridine: step 1/1. The sequence is that of Uridine kinase from Sodalis glossinidius (strain morsitans).